The primary structure comprises 242 residues: Tryptophan synthase alpha chain (242 aa).

Active-site proton acceptor residues include glutamate 31 and aspartate 42.

This sequence belongs to the TrpA family. As to quaternary structure, tetramer of two alpha and two beta chains.

The catalysed reaction is (1S,2R)-1-C-(indol-3-yl)glycerol 3-phosphate + L-serine = D-glyceraldehyde 3-phosphate + L-tryptophan + H2O. It functions in the pathway amino-acid biosynthesis; L-tryptophan biosynthesis; L-tryptophan from chorismate: step 5/5. In terms of biological role, the alpha subunit is responsible for the aldol cleavage of indoleglycerol phosphate to indole and glyceraldehyde 3-phosphate. This is Tryptophan synthase alpha chain from Staphylococcus aureus (strain bovine RF122 / ET3-1).